The chain runs to 307 residues: Ribosomal RNA small subunit methyltransferase H (307 aa).

S-adenosyl-L-methionine contacts are provided by residues 32-34 (GGH), D52, F78, D100, and Q107.

The protein belongs to the methyltransferase superfamily. RsmH family.

It is found in the cytoplasm. It carries out the reaction cytidine(1402) in 16S rRNA + S-adenosyl-L-methionine = N(4)-methylcytidine(1402) in 16S rRNA + S-adenosyl-L-homocysteine + H(+). Specifically methylates the N4 position of cytidine in position 1402 (C1402) of 16S rRNA. This chain is Ribosomal RNA small subunit methyltransferase H, found in Coxiella burnetii (strain CbuG_Q212) (Coxiella burnetii (strain Q212)).